Reading from the N-terminus, the 849-residue chain is MSQQHEATAAAAEKPLNNGYLQANAPLEELSATVVSPLLGQQQVQHQAPHQMQQQQQQQQQNKLPTVVFLAPDGSGGVGIQRGNPAQGNPGMVTGTGSHSDWLLKESQQRRRLLVLAIAFTVLGAAIGALAIYFASVHQRCHLYRLEPDNDDRPNGRWNQDSGSAHEGQDNICMTQECVRTAASLLSAMDLNSDPCEDFFQYACGTWNKMHPIPEDRSSISTFEVLSDQQQVILRAVLEEPIDERDNKATIKAKTFFKSCMDIPQIRKIGTGRLKQVLQSLGGWPVIERNWSPPADLSVERLMGQLRLNYSEPVMIELYVGADDKNSSVNILQMDQLQYALPSRDYYLKESSANDRRAYHRYMTQVALLLGADPATAAAELEKVVLFETQLVNVSLPEADRHDTSLVYRKMLLPELQELVPEVQWQEYLQAALGPGIPLQEDEPLVTYGLHYLTEMGKILAHTDRRVVHNYMLWRLVMSLMSHMIDEYQRERVEFRKILMGIQSERTRWSQCVEWTNKKLGVAVGALFIRDNFNQESKEVALEMIHTIRAAFNELLAENDWMDDETRAVAKEKADSMNERIGYPELLTNATELEQEYVNLTIVPDNFINNVLSILQWESEKMLRLLRQPVDKEKWTTEPAVVNAFYNPNKNDIVFPAGILQPLFYSQHFPKSLNYGGIGVVIGHEITHGFDDKGRQFDKEGNMMQWWNNATIEAFRERTQCVIDQYSRYKINEVDMFMDGRMTQGENIADNGGLKQAFRAYKKWETLHGREQQLPGLNMTHDQLFFLNYAQIWCGSMRPEDALTKIRSAVHSPGFVRVLGPLSNSRDFASAYKCPLGSTMNPAEKCSVW.

At 1 to 113 (MSQQHEATAA…LKESQQRRRL (113 aa)) the chain is on the cytoplasmic side. The segment covering 41–61 (QQQVQHQAPHQMQQQQQQQQQ) has biased composition (low complexity). Residues 41-63 (QQQVQHQAPHQMQQQQQQQQQNK) are disordered. A helical; Signal-anchor for type II membrane protein membrane pass occupies residues 114 to 134 (LVLAIAFTVLGAAIGALAIYF). Topologically, residues 135–849 (ASVHQRCHLY…MNPAEKCSVW (715 aa)) are extracellular. A compositionally biased stretch (basic and acidic residues) spans 146 to 155 (LEPDNDDRPN). Positions 146 to 167 (LEPDNDDRPNGRWNQDSGSAHE) are disordered. The region spanning 172–849 (ICMTQECVRT…MNPAEKCSVW (678 aa)) is the Peptidase M13 domain. Intrachain disulfides connect Cys-173–Cys-178, Cys-196–Cys-834, Cys-204–Cys-794, Cys-260–Cys-512, and Cys-721–Cys-846. Residues Asn-309, Asn-326, Asn-393, Asn-589, and Asn-599 are each glycosylated (N-linked (GlcNAc...) asparagine). Residue His-684 participates in Zn(2+) binding. Glu-685 is an active-site residue. Position 688 (His-688) interacts with Zn(2+). Residue Asn-709 is glycosylated (N-linked (GlcNAc...) asparagine). Position 746 (Glu-746) interacts with Zn(2+). Catalysis depends on Asp-750, which acts as the Proton donor. Asn-778 is a glycosylation site (N-linked (GlcNAc...) asparagine).

It belongs to the peptidase M13 family. Requires Zn(2+) as cofactor. As to expression, expressed in the testicular tube, near and in the seminal vesicles. In adults and third-instar larvae, expressed in the midgut and in the mushroom bodies of the brain and neurons in the pars intercerebralis. Also expressed in neurons of the ventral ganglion and imaginal disks (wing and leg) of third-instar larvae. In stage 17 embryos, expressed in the peripheral nervous system, pharynx and midgut.

Its subcellular location is the cell membrane. It carries out the reaction Preferential cleavage of polypeptides between hydrophobic residues, particularly with Phe or Tyr at P1'.. Its function is as follows. Metalloendoprotease which functions in fertility and memory formation. Required in the dorsal paired medial neurons and alpha/beta mushroom body neurons for the proper formation of long-term and middle-term memories. Required in males to maximise egg-laying in female mates and is also required in females for their fertility. This chain is Neprilysin-1, found in Drosophila melanogaster (Fruit fly).